The primary structure comprises 421 residues: Serine hydroxymethyltransferase (421 aa).

(6S)-5,6,7,8-tetrahydrofolate contacts are provided by residues Leu121 and 125 to 127 (GHL). An N6-(pyridoxal phosphate)lysine modification is found at Lys229.

This sequence belongs to the SHMT family. In terms of assembly, homodimer. The cofactor is pyridoxal 5'-phosphate.

It localises to the cytoplasm. It catalyses the reaction (6R)-5,10-methylene-5,6,7,8-tetrahydrofolate + glycine + H2O = (6S)-5,6,7,8-tetrahydrofolate + L-serine. The protein operates within one-carbon metabolism; tetrahydrofolate interconversion. It participates in amino-acid biosynthesis; glycine biosynthesis; glycine from L-serine: step 1/1. In terms of biological role, catalyzes the reversible interconversion of serine and glycine with tetrahydrofolate (THF) serving as the one-carbon carrier. This reaction serves as the major source of one-carbon groups required for the biosynthesis of purines, thymidylate, methionine, and other important biomolecules. Also exhibits THF-independent aldolase activity toward beta-hydroxyamino acids, producing glycine and aldehydes, via a retro-aldol mechanism. This chain is Serine hydroxymethyltransferase, found in Actinobacillus pleuropneumoniae serotype 5b (strain L20).